Consider the following 295-residue polypeptide: Bifunctional protein FolD (295 aa).

NADP(+) contacts are provided by residues 177–179 (GRS) and Ser202.

The protein belongs to the tetrahydrofolate dehydrogenase/cyclohydrolase family. As to quaternary structure, homodimer.

It catalyses the reaction (6R)-5,10-methylene-5,6,7,8-tetrahydrofolate + NADP(+) = (6R)-5,10-methenyltetrahydrofolate + NADPH. The enzyme catalyses (6R)-5,10-methenyltetrahydrofolate + H2O = (6R)-10-formyltetrahydrofolate + H(+). It functions in the pathway one-carbon metabolism; tetrahydrofolate interconversion. In terms of biological role, catalyzes the oxidation of 5,10-methylenetetrahydrofolate to 5,10-methenyltetrahydrofolate and then the hydrolysis of 5,10-methenyltetrahydrofolate to 10-formyltetrahydrofolate. The polypeptide is Bifunctional protein FolD (Psychrobacter arcticus (strain DSM 17307 / VKM B-2377 / 273-4)).